The following is a 66-amino-acid chain: DNA-directed RNA polymerase subunit Rpo10 (66 aa).

Zn(2+)-binding residues include cysteine 7, cysteine 10, cysteine 44, and cysteine 45.

Belongs to the archaeal Rpo10/eukaryotic RPB10 RNA polymerase subunit family. As to quaternary structure, part of the RNA polymerase complex. The cofactor is Zn(2+).

Its subcellular location is the cytoplasm. The catalysed reaction is RNA(n) + a ribonucleoside 5'-triphosphate = RNA(n+1) + diphosphate. Its function is as follows. DNA-dependent RNA polymerase (RNAP) catalyzes the transcription of DNA into RNA using the four ribonucleoside triphosphates as substrates. This Sulfurisphaera tokodaii (strain DSM 16993 / JCM 10545 / NBRC 100140 / 7) (Sulfolobus tokodaii) protein is DNA-directed RNA polymerase subunit Rpo10.